Reading from the N-terminus, the 158-residue chain is Large ribosomal subunit protein uL22 (158 aa).

Belongs to the universal ribosomal protein uL22 family. Part of the 50S ribosomal subunit.

In terms of biological role, this protein binds specifically to 23S rRNA. It makes multiple contacts with different domains of the 23S rRNA in the assembled 50S subunit and ribosome. Its function is as follows. The globular domain of the protein is located near the polypeptide exit tunnel on the outside of the subunit, while an extended beta-hairpin is found that lines the wall of the exit tunnel in the center of the 70S ribosome. In Haloquadratum walsbyi (strain DSM 16790 / HBSQ001), this protein is Large ribosomal subunit protein uL22.